A 434-amino-acid polypeptide reads, in one-letter code: Probable phosphatidylinositol 3,4,5-trisphosphate 3-phosphatase TEP1 (434 aa).

One can recognise a Phosphatase tensin-type domain in the interval 33–255; sequence KTKNDIGLRL…RYHEFFITHE (223 aa). Cys-193 functions as the Phosphocysteine intermediate in the catalytic mechanism.

It carries out the reaction a 1,2-diacyl-sn-glycero-3-phospho-(1D-myo-inositol-3,4,5-trisphosphate) + H2O = a 1,2-diacyl-sn-glycero-3-phospho-(1D-myo-inositol-4,5-bisphosphate) + phosphate. Its function is as follows. May act as a phosphoinositide 3-phosphatase by regulating PtdIns(3,4,5)P3 levels. In Saccharomyces cerevisiae (strain ATCC 204508 / S288c) (Baker's yeast), this protein is Probable phosphatidylinositol 3,4,5-trisphosphate 3-phosphatase TEP1 (TEP1).